The following is a 422-amino-acid chain: UDP-N-acetylglucosamine 1-carboxyvinyltransferase (422 aa).

22-23 (KN) contributes to the phosphoenolpyruvate binding site. Residue Arg-94 participates in UDP-N-acetyl-alpha-D-glucosamine binding. The active-site Proton donor is Cys-118. 2-(S-cysteinyl)pyruvic acid O-phosphothioketal is present on Cys-118. UDP-N-acetyl-alpha-D-glucosamine contacts are provided by residues 123–127 (RPVDL), Asp-309, and Ile-331.

It belongs to the EPSP synthase family. MurA subfamily.

The protein resides in the cytoplasm. The catalysed reaction is phosphoenolpyruvate + UDP-N-acetyl-alpha-D-glucosamine = UDP-N-acetyl-3-O-(1-carboxyvinyl)-alpha-D-glucosamine + phosphate. Its pathway is cell wall biogenesis; peptidoglycan biosynthesis. Its function is as follows. Cell wall formation. Adds enolpyruvyl to UDP-N-acetylglucosamine. In Cereibacter sphaeroides (strain ATCC 17025 / ATH 2.4.3) (Rhodobacter sphaeroides), this protein is UDP-N-acetylglucosamine 1-carboxyvinyltransferase.